Here is a 343-residue protein sequence, read N- to C-terminus: Probable dual-specificity RNA methyltransferase RlmN (343 aa).

Glutamate 90 acts as the Proton acceptor in catalysis. The Radical SAM core domain maps to 96–325 (HEGYATACIS…AEIRYEKGAD (230 aa)). A disulfide bridge links cysteine 103 with cysteine 330. Cysteine 110, cysteine 114, and cysteine 117 together coordinate [4Fe-4S] cluster. S-adenosyl-L-methionine-binding positions include 157 to 158 (GE), serine 189, 212 to 214 (SLH), and asparagine 288. Cysteine 330 acts as the S-methylcysteine intermediate in catalysis.

It belongs to the radical SAM superfamily. RlmN family. Requires [4Fe-4S] cluster as cofactor.

The protein localises to the cytoplasm. The catalysed reaction is adenosine(2503) in 23S rRNA + 2 reduced [2Fe-2S]-[ferredoxin] + 2 S-adenosyl-L-methionine = 2-methyladenosine(2503) in 23S rRNA + 5'-deoxyadenosine + L-methionine + 2 oxidized [2Fe-2S]-[ferredoxin] + S-adenosyl-L-homocysteine. It catalyses the reaction adenosine(37) in tRNA + 2 reduced [2Fe-2S]-[ferredoxin] + 2 S-adenosyl-L-methionine = 2-methyladenosine(37) in tRNA + 5'-deoxyadenosine + L-methionine + 2 oxidized [2Fe-2S]-[ferredoxin] + S-adenosyl-L-homocysteine. Its function is as follows. Specifically methylates position 2 of adenine 2503 in 23S rRNA and position 2 of adenine 37 in tRNAs. This chain is Probable dual-specificity RNA methyltransferase RlmN, found in Pseudothermotoga lettingae (strain ATCC BAA-301 / DSM 14385 / NBRC 107922 / TMO) (Thermotoga lettingae).